The sequence spans 144 residues: Large ribosomal subunit protein uL11 (144 aa).

Belongs to the universal ribosomal protein uL11 family. Part of the ribosomal stalk of the 50S ribosomal subunit. Interacts with L10 and the large rRNA to form the base of the stalk. L10 forms an elongated spine to which L12 dimers bind in a sequential fashion forming a multimeric L10(L12)X complex. In terms of processing, one or more lysine residues are methylated.

Functionally, forms part of the ribosomal stalk which helps the ribosome interact with GTP-bound translation factors. The protein is Large ribosomal subunit protein uL11 of Legionella pneumophila (strain Paris).